Reading from the N-terminus, the 216-residue chain is UPF0502 protein Spea_2482 (216 aa).

Belongs to the UPF0502 family.

The protein is UPF0502 protein Spea_2482 of Shewanella pealeana (strain ATCC 700345 / ANG-SQ1).